The primary structure comprises 80 residues: uncharacterized protein (80 aa).

3 consecutive transmembrane segments (helical) span residues 2 to 22 (INLW…IGQV), 32 to 52 (FFGM…LTGG), and 55 to 75 (LVTG…RFMV).

Its subcellular location is the cell membrane. This is an uncharacterized protein from Escherichia coli (strain K12).